The chain runs to 459 residues: MLLSFDEVCAAVQGARVCDARGARGFDGVSFDSRAVVPRDLFIPLRGAHVDGHTFVEEALQKGAVATLIDQRYPHAGEYVAWCTRFGAACIAVHDTLRALQDLASFYCKKFPALIRIGITGSSGKTTVKEMARAVFSERYRVVATPGNLNSEIGLPQSLFFVRAEHEVGIFELGMNRRGEMRTLAQILVPHYAIITNVGCAHVGILGTQQAIAEEKKEIFSQFTEHSVGFVPDDAYRVFLSNIPYGRVVVYDQGGRGLATEVIDEGLRGSRVLYQGRWIRVPLPGVHNAKNALAVIALAAQVGLPAEEIQRGMERVKPPFGRSHVVCASLTFLLDCYNANPDSMAAALHLCAHISAVSKVYVLGDMGELGVTAAEAHYRVCVLAAASDARAVYVFGPEFCRAVRKVSWGRKRVYAFALEELSALQETLDAQLRRGDFVLVKGSRSVALERLEPLLRKER.

121–127 is an ATP binding site; it reads GSSGKTT.

It belongs to the MurCDEF family. MurF subfamily.

The protein localises to the cytoplasm. The catalysed reaction is D-alanyl-D-alanine + UDP-N-acetyl-alpha-D-muramoyl-L-alanyl-gamma-D-glutamyl-meso-2,6-diaminopimelate + ATP = UDP-N-acetyl-alpha-D-muramoyl-L-alanyl-gamma-D-glutamyl-meso-2,6-diaminopimeloyl-D-alanyl-D-alanine + ADP + phosphate + H(+). It functions in the pathway cell wall biogenesis; peptidoglycan biosynthesis. Involved in cell wall formation. Catalyzes the final step in the synthesis of UDP-N-acetylmuramoyl-pentapeptide, the precursor of murein. The chain is UDP-N-acetylmuramoyl-tripeptide--D-alanyl-D-alanine ligase from Treponema pallidum (strain Nichols).